Consider the following 410-residue polypeptide: uncharacterized protein (410 aa).

Histidine 87 contacts Zn(2+). Aspartate 89 is an active-site residue. Zn(2+) is bound at residue aspartate 120. The active-site Proton acceptor is the glutamate 154. Residues glutamate 155, aspartate 184, and histidine 387 each coordinate Zn(2+).

This sequence belongs to the peptidase M20A family. Requires Zn(2+) as cofactor. The cofactor is Co(2+).

This is an uncharacterized protein from Methanocaldococcus jannaschii (strain ATCC 43067 / DSM 2661 / JAL-1 / JCM 10045 / NBRC 100440) (Methanococcus jannaschii).